Consider the following 131-residue polypeptide: Profilin LP04 (131 aa).

It belongs to the profilin family. In terms of assembly, occurs in many kinds of cells as a complex with monomeric actin in a 1:1 ratio.

It is found in the cytoplasm. It localises to the cytoskeleton. In terms of biological role, binds to actin and affects the structure of the cytoskeleton. At high concentrations, profilin prevents the polymerization of actin, whereas it enhances it at low concentrations. By binding to PIP2, it inhibits the formation of IP3 and DG. The polypeptide is Profilin LP04 (Oryza sativa subsp. indica (Rice)).